Reading from the N-terminus, the 364-residue chain is Peroxidase (364 aa).

The first 20 residues, 1-20 (MKLSLFSTFAAVIIGALALP), serve as a signal peptide directing secretion. Pyrrolidone carboxylic acid is present on Gln-21. 4 disulfides stabilise this stretch: Cys-32-Cys-44, Cys-43-Cys-313, Cys-63-Cys-149, and Cys-277-Cys-342. The active-site Proton acceptor is His-76. Residues Asp-77, Gly-95, Asp-97, and Ser-99 each coordinate Ca(2+). N-linked (GlcNAc...) (high mannose) asparagine glycosylation is present at Asn-163. Heme b is bound at residue His-204. Ser-205, Asp-222, Thr-224, Val-227, and Asp-229 together coordinate Ca(2+).

This sequence belongs to the peroxidase family. Ligninase subfamily. Ca(2+) is required as a cofactor. Heme b serves as cofactor.

The protein resides in the secreted. The enzyme catalyses 2 a phenolic donor + H2O2 = 2 a phenolic radical donor + 2 H2O. The sequence is that of Peroxidase from Arthromyces ramosus.